The chain runs to 73 residues: UPF0150 protein ssl0259 (73 aa).

Belongs to the UPF0150 family.

The protein is UPF0150 protein ssl0259 of Synechocystis sp. (strain ATCC 27184 / PCC 6803 / Kazusa).